We begin with the raw amino-acid sequence, 506 residues long: Cobyric acid synthase (506 aa).

A GATase cobBQ-type domain is found at 251-448 (DITIAIVQLP…LHGLFDSDAF (198 aa)). The active-site Nucleophile is Cys-332. His-440 is a catalytic residue.

Belongs to the CobB/CobQ family. CobQ subfamily. As to quaternary structure, homodimer.

It functions in the pathway cofactor biosynthesis; adenosylcobalamin biosynthesis. Catalyzes amidations at positions B, D, E, and G on adenosylcobyrinic A,C-diamide. NH(2) groups are provided by glutamine, and one molecule of ATP is hydrogenolyzed for each amidation. The sequence is that of Cobyric acid synthase (cbiP) from Salmonella typhimurium (strain LT2 / SGSC1412 / ATCC 700720).